The following is a 90-amino-acid chain: Probable Fe(2+)-trafficking protein (90 aa).

This sequence belongs to the Fe(2+)-trafficking protein family.

In terms of biological role, could be a mediator in iron transactions between iron acquisition and iron-requiring processes, such as synthesis and/or repair of Fe-S clusters in biosynthetic enzymes. The polypeptide is Probable Fe(2+)-trafficking protein (Laribacter hongkongensis (strain HLHK9)).